The chain runs to 165 residues: Pyruvoyl-dependent arginine decarboxylase 1 (165 aa).

Serine 45 carries the post-translational modification Pyruvic acid (Ser).

The protein belongs to the PdaD family. Requires pyruvate as cofactor.

It catalyses the reaction L-arginine + H(+) = agmatine + CO2. The sequence is that of Pyruvoyl-dependent arginine decarboxylase 1 (pdaD1) from Methanosarcina mazei (strain ATCC BAA-159 / DSM 3647 / Goe1 / Go1 / JCM 11833 / OCM 88) (Methanosarcina frisia).